The primary structure comprises 153 residues: Small ribosomal subunit protein uS13 (153 aa).

A disordered region spans residues 132–153; that stretch reads VRGQRTRSHHRKGRTVGVIKKK. A compositionally biased stretch (basic residues) spans 135–153; the sequence is QRTRSHHRKGRTVGVIKKK.

The protein belongs to the universal ribosomal protein uS13 family. In terms of assembly, part of the 30S ribosomal subunit. Forms a loose heterodimer with protein S19. Forms two bridges to the 50S subunit in the 70S ribosome.

Located at the top of the head of the 30S subunit, it contacts several helices of the 16S rRNA. In the 70S ribosome it contacts the 23S rRNA (bridge B1a) and protein L5 of the 50S subunit (bridge B1b), connecting the 2 subunits; these bridges are implicated in subunit movement. This Nanoarchaeum equitans (strain Kin4-M) protein is Small ribosomal subunit protein uS13.